A 272-amino-acid chain; its full sequence is Phosphatidylglycerol--prolipoprotein diacylglyceryl transferase (272 aa).

The next 7 membrane-spanning stretches (helical) occupy residues 17–37, 59–79, 95–115, 129–149, 176–196, 202–222, and 237–257; these read LAIR…LGFG, MLFF…VLFY, WEGG…MWLF, FIAP…FING, SQLY…WLFA, MGAV…AAEF, and LSMG…MVVW. A 1,2-diacyl-sn-glycero-3-phospho-(1'-sn-glycerol) is bound at residue Arg-142.

It belongs to the Lgt family.

The protein resides in the cell inner membrane. The enzyme catalyses L-cysteinyl-[prolipoprotein] + a 1,2-diacyl-sn-glycero-3-phospho-(1'-sn-glycerol) = an S-1,2-diacyl-sn-glyceryl-L-cysteinyl-[prolipoprotein] + sn-glycerol 1-phosphate + H(+). Its pathway is protein modification; lipoprotein biosynthesis (diacylglyceryl transfer). Catalyzes the transfer of the diacylglyceryl group from phosphatidylglycerol to the sulfhydryl group of the N-terminal cysteine of a prolipoprotein, the first step in the formation of mature lipoproteins. This is Phosphatidylglycerol--prolipoprotein diacylglyceryl transferase from Cupriavidus necator (strain ATCC 17699 / DSM 428 / KCTC 22496 / NCIMB 10442 / H16 / Stanier 337) (Ralstonia eutropha).